Consider the following 391-residue polypeptide: Inactive polyketide synthase 2 (391 aa).

Cys164 is an active-site residue.

The protein belongs to the thiolase-like superfamily. Chalcone/stilbene synthases family. Homodimer.

In Rubus idaeus (Raspberry), this protein is Inactive polyketide synthase 2 (PKS2).